The primary structure comprises 291 residues: MALTTSRASGSPRIQTHTVVRIAKRHPLVLLGGGILLLLILLALAAPLYSGDPLVMDPFKRLQQPSASMWFGTDNLGRDVFARTIYGARISLIVGLLSAVCAAVCGLLIGVIAGYSRTFDNIIMRVMDGLMSIPTFLLAIALLSLTGPGIGILIVAIAIPETPAVTRLVRSVVLSVRSRPYVEAALCGGARLPRVLWRHILPSTIPPLMVQSATVCASAIMTEAGLSFIGVGVPSEIPSWGNMIANSRLFLAIAPLTIFAPGLCLAVTVLAVNLLGDGLRDMFDPRSKRRR.

5 helical membrane passes run 28-48 (LVLL…AAPL), 92-112 (LIVG…IGVI), 137-157 (LLAI…IVAI), 213-233 (ATVC…GVGV), and 249-269 (LFLA…AVTV). Residues 88-276 (ARISLIVGLL…VTVLAVNLLG (189 aa)) enclose the ABC transmembrane type-1 domain.

This sequence belongs to the binding-protein-dependent transport system permease family. OppBC subfamily.

Its subcellular location is the cell inner membrane. Functionally, probably part of the binding-protein-dependent transport system y4tOPQRS for a peptide. Probably responsible for the translocation of the substrate across the membrane. This chain is Probable peptide ABC transporter permease protein y4tQ, found in Sinorhizobium fredii (strain NBRC 101917 / NGR234).